We begin with the raw amino-acid sequence, 299 residues long: uncharacterized protein (299 aa).

A run of 8 helical transmembrane segments spans residues 13 to 33, 36 to 56, 79 to 99, 112 to 132, 151 to 171, 201 to 221, 241 to 261, and 267 to 287; these read ILFL…LHFM, AFVI…FLML, SFGI…VIII, TAIG…ISVI, ITSE…LFFI, FLIL…VILV, YVIL…MLLS, and PPGP…FLII.

Belongs to the ABC-3 integral membrane protein family.

The protein resides in the plastid. It localises to the cyanelle membrane. This is an uncharacterized protein from Cyanophora paradoxa.